The chain runs to 181 residues: Large ribosomal subunit protein uL5 (181 aa).

The protein belongs to the universal ribosomal protein uL5 family. As to quaternary structure, part of the 50S ribosomal subunit; part of the 5S rRNA/L5/L18/L25 subcomplex. Contacts the 5S rRNA and the P site tRNA. Forms a bridge to the 30S subunit in the 70S ribosome.

This is one of the proteins that bind and probably mediate the attachment of the 5S RNA into the large ribosomal subunit, where it forms part of the central protuberance. In the 70S ribosome it contacts protein S13 of the 30S subunit (bridge B1b), connecting the 2 subunits; this bridge is implicated in subunit movement. Contacts the P site tRNA; the 5S rRNA and some of its associated proteins might help stabilize positioning of ribosome-bound tRNAs. This Rickettsia canadensis (strain McKiel) protein is Large ribosomal subunit protein uL5.